The sequence spans 78 residues: ATP synthase subunit a (78 aa).

The chain crosses the membrane as a helical span at residues 34–54; that stretch reads LTNIGLYLTIGIFLILTYSLL.

It belongs to the ATPase A chain family. F-type ATPases have 2 components, CF(1) - the catalytic core - and CF(0) - the membrane proton channel. CF(1) has five subunits: alpha(3), beta(3), gamma(1), delta(1), epsilon(1). CF(0) has three main subunits: a, b and c.

The protein localises to the mitochondrion inner membrane. Functionally, mitochondrial membrane ATP synthase (F(1)F(0) ATP synthase or Complex V) produces ATP from ADP in the presence of a proton gradient across the membrane which is generated by electron transport complexes of the respiratory chain. F-type ATPases consist of two structural domains, F(1) - containing the extramembraneous catalytic core and F(0) - containing the membrane proton channel, linked together by a central stalk and a peripheral stalk. During catalysis, ATP synthesis in the catalytic domain of F(1) is coupled via a rotary mechanism of the central stalk subunits to proton translocation. Key component of the proton channel; it may play a direct role in the translocation of protons across the membrane. The sequence is that of ATP synthase subunit a (atp6) from Aspergillus amstelodami.